The sequence spans 457 residues: Multidrug resistance protein MdtK (457 aa).

Helical transmembrane passes span 11–31 (LLAL…MGVV), 46–66 (AVAV…GLLL), 93–113 (WLAF…DHII), 127–147 (AVGF…FQVL), 160–180 (GMVI…IFIY), 188–208 (LGGV…FLMM), 243–263 (LPVA…ALLV), 278–300 (LNFS…IRVG), 316–336 (YTSI…TVVF), 350–370 (VVVM…SDAI), 387–407 (IFFI…YLLG), and 418–438 (PSGF…LMAL).

Belongs to the multi antimicrobial extrusion (MATE) (TC 2.A.66.1) family. MdtK subfamily.

The protein resides in the cell inner membrane. Functionally, multidrug efflux pump that functions probably as a Na(+)/drug antiporter. The chain is Multidrug resistance protein MdtK from Yersinia enterocolitica serotype O:8 / biotype 1B (strain NCTC 13174 / 8081).